We begin with the raw amino-acid sequence, 234 residues long: MGQKVNPVGLRLGINRNWTSRWFPSARTAPSNIDEDNKIRKFLKKELYYAGVSQIVIERAAKKLRVTVVAARPGLIIGKKGVDIEKVKEGLKTLIKKEVSINIKEVKRPQADAQLAAENVATQLEKRVAFRRAMKKVMQAALKSGAKGVKVRVSGRLAGAEIARTEWYMEGRVPLHTLRAKIDYGFAEAMTVYGIIGVKVWIFKGEVLQKGIQFEKKEEVKEEREPRRSRRGRQ.

Residues 39 to 107 (IRKFLKKELY…EVSINIKEVK (69 aa)) form the KH type-2 domain.

The protein belongs to the universal ribosomal protein uS3 family. Part of the 30S ribosomal subunit. Forms a tight complex with proteins S10 and S14.

Binds the lower part of the 30S subunit head. Binds mRNA in the 70S ribosome, positioning it for translation. This Helicobacter acinonychis (strain Sheeba) protein is Small ribosomal subunit protein uS3.